A 473-amino-acid polypeptide reads, in one-letter code: ATP synthase subunit beta (473 aa).

ATP is bound at residue 153 to 160; it reads GGAGVGKT.

Belongs to the ATPase alpha/beta chains family. F-type ATPases have 2 components, CF(1) - the catalytic core - and CF(0) - the membrane proton channel. CF(1) has five subunits: alpha(3), beta(3), gamma(1), delta(1), epsilon(1). CF(0) has three main subunits: a(1), b(2) and c(9-12). The alpha and beta chains form an alternating ring which encloses part of the gamma chain. CF(1) is attached to CF(0) by a central stalk formed by the gamma and epsilon chains, while a peripheral stalk is formed by the delta and b chains.

Its subcellular location is the cell inner membrane. The catalysed reaction is ATP + H2O + 4 H(+)(in) = ADP + phosphate + 5 H(+)(out). Functionally, produces ATP from ADP in the presence of a proton gradient across the membrane. The catalytic sites are hosted primarily by the beta subunits. This chain is ATP synthase subunit beta, found in Rickettsia bellii (strain RML369-C).